A 254-amino-acid polypeptide reads, in one-letter code: Phosphatidylglycerol--prolipoprotein diacylglyceryl transferase (254 aa).

Helical transmembrane passes span 11-31 (LAIR…LLLA), 49-69 (FLIA…IFEF), 84-104 (QGGL…YIYL), and 109-129 (ESFF…QAIG). Residue arginine 130 participates in a 1,2-diacyl-sn-glycero-3-phospho-(1'-sn-glycerol) binding. The next 3 helical transmembrane spans lie at 169–189 (PTFL…VYLL), 196–216 (GIVF…IEGL), and 228–248 (VAQL…YNII).

Belongs to the Lgt family.

It localises to the cell membrane. It carries out the reaction L-cysteinyl-[prolipoprotein] + a 1,2-diacyl-sn-glycero-3-phospho-(1'-sn-glycerol) = an S-1,2-diacyl-sn-glyceryl-L-cysteinyl-[prolipoprotein] + sn-glycerol 1-phosphate + H(+). It participates in protein modification; lipoprotein biosynthesis (diacylglyceryl transfer). In terms of biological role, catalyzes the transfer of the diacylglyceryl group from phosphatidylglycerol to the sulfhydryl group of the N-terminal cysteine of a prolipoprotein, the first step in the formation of mature lipoproteins. In Clostridium botulinum (strain Langeland / NCTC 10281 / Type F), this protein is Phosphatidylglycerol--prolipoprotein diacylglyceryl transferase.